A 601-amino-acid polypeptide reads, in one-letter code: MEGSDFLLAGVLFLFAAVAAVPLASRLGIGAVLGYLLAGIAIGPWGLGFISDVDEILHFSELGVVFLMFIIGLELNPSKLWQLRRSIFGVGAAQVLLSAALLAGLLMLTDFAWQAAVVGGIGLAMSSTAMALQLMREKGMNRSESGQLGFSVLLFQDLAVIPALALVPLLAGSADEHFDWMKIGIKVLAFVGMLIGGRYLLRPVFRFIAASGVREVFTAATLLLVLGSALFMDALGLSMALGTFIAGVLLAESEYRHELETAIDPFKGLLLGLFFISVGMSLNLGVLYTHLLWVVISVVVLVAVKILVLYLLARLYGVRSSERMQFAGVLSQGGEFAFVLFSTASSQRLFQGDQMALLLVTVTLSMMTTPLLMKLVDKWLSRQFNGPEEEDEKPWVNDDKPQVIVVGFGRFGQVIGRLLMANKMRITVLERDISAVNLMRKYGYKVYYGDATQVDLLRSAGAEAAESIVITCNEPEDTMKLVEICQQHFPHLHILARARGRVEAHELLQAGVTQFSRETFSSALELGRKTLVTLGMHPHQAQRAQLHFRRLDMRMLRELIPMHADTVQISRAREARRELEEIFQREMQQERRQLDGWDEFE.

13 helical membrane-spanning segments follow: residues 4 to 24 (SDFL…VPLA), 29 to 49 (IGAV…GLGF), 55 to 75 (EILH…GLEL), 87 to 107 (IFGV…GLLM), 115 to 135 (AAVV…LQLM), 152 to 172 (VLLF…LLAG), 177 to 197 (HFDW…LIGG), 207 to 227 (FIAA…LVLG), 230 to 250 (LFMD…GVLL), 268 to 288 (GLLL…GVLY), 291 to 311 (LLWV…VLYL), 324 to 344 (MQFA…FSTA), and 356 to 376 (ALLL…MKLV). The RCK N-terminal domain maps to 400–519 (KPQVIVVGFG…AGVTQFSRET (120 aa)).

The protein belongs to the monovalent cation:proton antiporter 2 (CPA2) transporter (TC 2.A.37) family. KefB subfamily. In terms of assembly, interacts with the regulatory subunit KefG.

It is found in the cell inner membrane. Functionally, pore-forming subunit of a potassium efflux system that confers protection against electrophiles. Catalyzes K(+)/H(+) antiport. This Escherichia coli (strain ATCC 8739 / DSM 1576 / NBRC 3972 / NCIMB 8545 / WDCM 00012 / Crooks) protein is Glutathione-regulated potassium-efflux system protein KefB.